We begin with the raw amino-acid sequence, 65 residues long: Conotoxin TsMRCL-04 (65 aa).

The N-terminal stretch at 1-20 is a signal peptide; the sequence is MRCLPVFIILLLLIPSAASA. The propeptide occupies 21-48; the sequence is AQPETKDDAALASFYDNAKRTLQRHWAK. Glu63 is subject to Glutamic acid 1-amide.

The protein belongs to the conotoxin T superfamily. In terms of processing, contains 2 disulfide bonds that can be either 'C1-C3, C2-C4' or 'C1-C4, C2-C3', since these disulfide connectivities have been observed for conotoxins with cysteine framework V (for examples, see AC P0DQQ7 and AC P81755). In terms of tissue distribution, expressed by the venom duct.

It localises to the secreted. In Conus tessulatus (Tessellate cone), this protein is Conotoxin TsMRCL-04.